A 70-amino-acid chain; its full sequence is UPF0434 protein MCA0634 (70 aa).

It belongs to the UPF0434 family.

The chain is UPF0434 protein MCA0634 from Methylococcus capsulatus (strain ATCC 33009 / NCIMB 11132 / Bath).